Here is a 368-residue protein sequence, read N- to C-terminus: Peptide chain release factor 2 (368 aa).

Glutamine 245 is modified (N5-methylglutamine).

The protein belongs to the prokaryotic/mitochondrial release factor family. Methylated by PrmC. Methylation increases the termination efficiency of RF2.

It is found in the cytoplasm. Peptide chain release factor 2 directs the termination of translation in response to the peptide chain termination codons UGA and UAA. This Treponema pallidum (strain Nichols) protein is Peptide chain release factor 2 (prfB).